A 188-amino-acid chain; its full sequence is Adenine phosphoribosyltransferase (188 aa).

This sequence belongs to the purine/pyrimidine phosphoribosyltransferase family. In terms of assembly, homodimer.

The protein localises to the cytoplasm. It carries out the reaction AMP + diphosphate = 5-phospho-alpha-D-ribose 1-diphosphate + adenine. It functions in the pathway purine metabolism; AMP biosynthesis via salvage pathway; AMP from adenine: step 1/1. Its function is as follows. Catalyzes a salvage reaction resulting in the formation of AMP, that is energically less costly than de novo synthesis. This chain is Adenine phosphoribosyltransferase, found in Salinispora arenicola (strain CNS-205).